Here is a 391-residue protein sequence, read N- to C-terminus: Tyrosine recombinase XerC-like (391 aa).

One can recognise a Core-binding (CB) domain in the interval 64–148 (VTLGDLMHTW…FLKTFFNYAV (85 aa)). Positions 175 to 384 (TEIETFSDEE…IPKQKTNAVE (210 aa)) constitute a Tyr recombinase domain. Catalysis depends on residues Arg210, Lys244, His335, Arg338, and His361. Tyr371 serves as the catalytic O-(3'-phospho-DNA)-tyrosine intermediate.

The protein belongs to the 'phage' integrase family.

The protein resides in the cytoplasm. Its function is as follows. Site-specific tyrosine recombinase, which acts by catalyzing the cutting and rejoining of the recombining DNA molecules. The polypeptide is Tyrosine recombinase XerC-like (Caldanaerobacter subterraneus subsp. tengcongensis (strain DSM 15242 / JCM 11007 / NBRC 100824 / MB4) (Thermoanaerobacter tengcongensis)).